The chain runs to 340 residues: MRIIYKQQTMNNNRRDFIKKLGIATAAIAINPLEAKNLLDTSEPKTTNKPIVLSTWNFGLHANVEAWKVLSKGGKALDAVEKGVRLVEDDPTERSVGYGGRPDRDGRVTLDACIMDENYNIGSVACMEHIKNPISVARAVMEKTPHVMLVGDGALEFALSQGFKKENLLTAESEKEWKEWLKTSQYKPIVNIENHDTIGMIALDAQGNLSGACTTSGMAYKMHGRVGDSPIIGAGLFVDNEIGAATATGHGEEVIRTVGTHLVVELMNQGRTPQQACKEAVERIVKIVNRRGKNLKDIQVGFIALNKKGEYGAYCIQDGFNFAVHDQKGNRLETPGFALK.

The N-terminal stretch at 1 to 45 (MRIIYKQQTMNNNRRDFIKKLGIATAAIAINPLEAKNLLDTSEPK) is a signal peptide. Thr-197 (nucleophile) is an active-site residue. Substrate is bound by residues 225 to 228 (RVGD) and 248 to 251 (TGHG).

Belongs to the Ntn-hydrolase family. Heterotetramer of two alpha and two beta chains arranged as a dimer of alpha/beta heterodimers. Cleaved into an alpha and beta chain by autocatalysis; this activates the enzyme. The N-terminal residue of the beta subunit is responsible for the nucleophile hydrolase activity.

The protein resides in the periplasm. It catalyses the reaction N(4)-(beta-N-acetyl-D-glucosaminyl)-L-asparagine + H2O = N-acetyl-beta-D-glucosaminylamine + L-aspartate + H(+). In terms of biological role, cleaves the GlcNAc-Asn bond which joins oligosaccharides to the peptide of asparagine-linked glycoproteins. Requires that the glycosylated asparagine moiety is not substituted on its N-(R1) and C- (R2) terminus. This Elizabethkingia miricola (Chryseobacterium miricola) protein is N(4)-(Beta-N-acetylglucosaminyl)-L-asparaginase.